A 357-amino-acid polypeptide reads, in one-letter code: Phospho-N-acetylmuramoyl-pentapeptide-transferase (357 aa).

10 consecutive transmembrane segments (helical) span residues 23–43 (AIFS…YFIY), 70–90 (TMGG…YCNL), 91–111 (SNIY…IGFI), 127–147 (LKWK…MIKI), 171–191 (YLYI…VNLT), 196–216 (GLAI…SLFS), 236–256 (LAIL…FNSY), 260–280 (VFMG…IAIL), 286–306 (LLII…LQII), and 334–354 (LIIV…LISL).

This sequence belongs to the glycosyltransferase 4 family. MraY subfamily. Mg(2+) serves as cofactor.

The protein localises to the cell inner membrane. It carries out the reaction UDP-N-acetyl-alpha-D-muramoyl-L-alanyl-gamma-D-glutamyl-meso-2,6-diaminopimeloyl-D-alanyl-D-alanine + di-trans,octa-cis-undecaprenyl phosphate = di-trans,octa-cis-undecaprenyl diphospho-N-acetyl-alpha-D-muramoyl-L-alanyl-D-glutamyl-meso-2,6-diaminopimeloyl-D-alanyl-D-alanine + UMP. It participates in cell wall biogenesis; peptidoglycan biosynthesis. In terms of biological role, catalyzes the initial step of the lipid cycle reactions in the biosynthesis of the cell wall peptidoglycan: transfers peptidoglycan precursor phospho-MurNAc-pentapeptide from UDP-MurNAc-pentapeptide onto the lipid carrier undecaprenyl phosphate, yielding undecaprenyl-pyrophosphoryl-MurNAc-pentapeptide, known as lipid I. The chain is Phospho-N-acetylmuramoyl-pentapeptide-transferase from Buchnera aphidicola subsp. Acyrthosiphon pisum (strain 5A).